The following is a 328-amino-acid chain: Interleukin-12 subunit beta (328 aa).

Positions Met-1–Ala-22 are cleaved as a signal peptide. The Ig-like C2-type domain occupies Asp-29–Lys-106. An intrachain disulfide couples Cys-50 to Cys-90. N-linked (GlcNAc...) asparagine glycans are attached at residues Asn-125, Asn-135, and Asn-222. In terms of domain architecture, Fibronectin type-III spans Pro-237–Ser-328.

Belongs to the IL-12B family. As to quaternary structure, heterodimer with IL12A; disulfide-linked. The heterodimer is known as interleukin IL-12. Heterodimer with IL23A; disulfide-linked. The heterodimer is known as interleukin IL-23. Also secreted as a monomer. Interacts with NBR1; this interaction promotes IL-12 secretion.

The protein localises to the secreted. Functionally, cytokine that can act as a growth factor for activated T and NK cells, enhance the lytic activity of NK/lymphokine-activated killer cells, and stimulate the production of IFN-gamma by resting PBMC. In terms of biological role, associates with IL23A to form the IL-23 interleukin, a heterodimeric cytokine which functions in innate and adaptive immunity. IL-23 may constitute with IL-17 an acute response to infection in peripheral tissues. IL-23 binds to a heterodimeric receptor complex composed of IL12RB1 and IL23R, activates the Jak-Stat signaling cascade, stimulates memory rather than naive T-cells and promotes production of pro-inflammatory cytokines. IL-23 induces autoimmune inflammation and thus may be responsible for autoimmune inflammatory diseases and may be important for tumorigenesis. In Macaca mulatta (Rhesus macaque), this protein is Interleukin-12 subunit beta (IL12B).